The chain runs to 160 residues: Cytochrome c-type biogenesis protein CcmE (160 aa).

The Cytoplasmic segment spans residues 1–7 (MTRKQRR). A helical; Signal-anchor for type II membrane protein transmembrane segment spans residues 8-28 (ATFIAVSLGILALAVGLVLYA). At 29–160 (MRDSIVYFYS…SETYGQGSYP (132 aa)) the chain is on the periplasmic side. Residues H122 and Y126 each contribute to the heme site. Positions 141–160 (WQGEGAEAPHSETYGQGSYP) are disordered.

This sequence belongs to the CcmE/CycJ family.

It localises to the cell inner membrane. Functionally, heme chaperone required for the biogenesis of c-type cytochromes. Transiently binds heme delivered by CcmC and transfers the heme to apo-cytochromes in a process facilitated by CcmF and CcmH. The polypeptide is Cytochrome c-type biogenesis protein CcmE (Parvibaculum lavamentivorans (strain DS-1 / DSM 13023 / NCIMB 13966)).